The sequence spans 138 residues: Aspartate 1-decarboxylase (138 aa).

Ser-25 functions as the Schiff-base intermediate with substrate; via pyruvic acid in the catalytic mechanism. Ser-25 carries the pyruvic acid (Ser) modification. Thr-57 contacts substrate. The active-site Proton donor is Tyr-58. 73–75 (GAA) lines the substrate pocket. A disordered region spans residues 116-138 (ELGGDPAQVPDGSGLKNPRHPEA).

The protein belongs to the PanD family. As to quaternary structure, heterooctamer of four alpha and four beta subunits. The cofactor is pyruvate. Post-translationally, is synthesized initially as an inactive proenzyme, which is activated by self-cleavage at a specific serine bond to produce a beta-subunit with a hydroxyl group at its C-terminus and an alpha-subunit with a pyruvoyl group at its N-terminus.

The protein resides in the cytoplasm. The enzyme catalyses L-aspartate + H(+) = beta-alanine + CO2. The protein operates within cofactor biosynthesis; (R)-pantothenate biosynthesis; beta-alanine from L-aspartate: step 1/1. Functionally, catalyzes the pyruvoyl-dependent decarboxylation of aspartate to produce beta-alanine. This Corynebacterium jeikeium (strain K411) protein is Aspartate 1-decarboxylase.